We begin with the raw amino-acid sequence, 158 residues long: Transmembrane protein 50B (158 aa).

Ala2 is subject to N-acetylalanine. The next 4 membrane-spanning stretches (helical) occupy residues 28–48 (VVAG…AVVY), 56–76 (HAFH…NAVS), 98–118 (WLFI…WILF), and 128–148 (VYPG…TLIY).

The protein belongs to the UPF0220 family. May form homotrimers or homodimers.

The protein localises to the endoplasmic reticulum membrane. It localises to the golgi apparatus membrane. The protein is Transmembrane protein 50B (TMEM50B) of Bos taurus (Bovine).